A 284-amino-acid chain; its full sequence is 2-dehydro-3-deoxyphosphooctonate aldolase (284 aa).

This sequence belongs to the KdsA family.

The protein resides in the cytoplasm. It catalyses the reaction D-arabinose 5-phosphate + phosphoenolpyruvate + H2O = 3-deoxy-alpha-D-manno-2-octulosonate-8-phosphate + phosphate. The protein operates within carbohydrate biosynthesis; 3-deoxy-D-manno-octulosonate biosynthesis; 3-deoxy-D-manno-octulosonate from D-ribulose 5-phosphate: step 2/3. It participates in bacterial outer membrane biogenesis; lipopolysaccharide biosynthesis. The chain is 2-dehydro-3-deoxyphosphooctonate aldolase from Ralstonia pickettii (strain 12J).